The following is a 398-amino-acid chain: Enoyl-[acyl-carrier-protein] reductase [NADH] (398 aa).

NAD(+)-binding positions include 48–53, 74–75, 111–112, and 139–140; these read GSSTGY, FE, DA, and LA. Residue Tyr225 participates in substrate binding. Tyr235 acts as the Proton donor in catalysis. Residues Lys244 and 273–275 each bind NAD(+); that span reads VVT.

Belongs to the TER reductase family. Monomer.

It catalyses the reaction a 2,3-saturated acyl-[ACP] + NAD(+) = a (2E)-enoyl-[ACP] + NADH + H(+). It participates in lipid metabolism; fatty acid biosynthesis. In terms of biological role, involved in the final reduction of the elongation cycle of fatty acid synthesis (FAS II). Catalyzes the reduction of a carbon-carbon double bond in an enoyl moiety that is covalently linked to an acyl carrier protein (ACP). The chain is Enoyl-[acyl-carrier-protein] reductase [NADH] from Pseudomonas aeruginosa (strain UCBPP-PA14).